The sequence spans 548 residues: Probable 2,3-bisphosphoglycerate-independent phosphoglycerate mutase (548 aa).

Mn(2+)-binding residues include Asp-20 and Ser-73. The Phosphoserine intermediate role is filled by Ser-73. Substrate-binding positions include His-134, 164-165, Arg-200, Arg-207, 279-282, and Lys-354; these read RD and RGDR. Positions 422, 426, 463, 464, and 493 each coordinate Mn(2+).

It belongs to the BPG-independent phosphoglycerate mutase family. In terms of assembly, monomer. It depends on Mn(2+) as a cofactor.

The enzyme catalyses (2R)-2-phosphoglycerate = (2R)-3-phosphoglycerate. Its pathway is carbohydrate degradation; glycolysis; pyruvate from D-glyceraldehyde 3-phosphate: step 3/5. Functionally, catalyzes the interconversion of 2-phosphoglycerate and 3-phosphoglycerate. The polypeptide is Probable 2,3-bisphosphoglycerate-independent phosphoglycerate mutase (gpmI) (Leptospira interrogans serogroup Icterohaemorrhagiae serovar Lai (strain 56601)).